The chain runs to 691 residues: Elongation factor G (691 aa).

Residues 8 to 283 enclose the tr-type G domain; the sequence is KKVRNIGIAA…AVVAYLPAPD (276 aa). GTP is bound by residues 17–24, 81–85, and 135–138; these read AHIDAGKT, DTPGH, and NKMD.

This sequence belongs to the TRAFAC class translation factor GTPase superfamily. Classic translation factor GTPase family. EF-G/EF-2 subfamily.

It localises to the cytoplasm. Its function is as follows. Catalyzes the GTP-dependent ribosomal translocation step during translation elongation. During this step, the ribosome changes from the pre-translocational (PRE) to the post-translocational (POST) state as the newly formed A-site-bound peptidyl-tRNA and P-site-bound deacylated tRNA move to the P and E sites, respectively. Catalyzes the coordinated movement of the two tRNA molecules, the mRNA and conformational changes in the ribosome. The chain is Elongation factor G from Campylobacter jejuni subsp. jejuni serotype O:6 (strain 81116 / NCTC 11828).